Here is a 210-residue protein sequence, read N- to C-terminus: Calcium-activated potassium channel subunit beta-4 (210 aa).

Residues 1-19 (MAKLRVSYEYTEAEDKSIR) lie on the Cytoplasmic side of the membrane. Residues 20–40 (LGLFLIVSGILSLFIFGFCWL) form a helical membrane-spanning segment. Residues 41–167 (SPALQDLQAT…DVLLQRTHDE (127 aa)) lie on the Extracellular side of the membrane. Residues asparagine 53 and asparagine 90 are each glycosylated (N-linked (GlcNAc...) asparagine). A helical transmembrane segment spans residues 168–188 (IVLLHCFLWPVVAFVVGVLIV). At 189–210 (VLTICAKSLAVKAEAMKKRKFS) the chain is on the cytoplasmic side.

This sequence belongs to the KCNMB (TC 8.A.14.1) family. KCNMB4 subfamily. Interacts with KCNMA1 tetramer. There are probably 4 molecules of KCMNB4 per KCNMA1 tetramer. Interacts with FMR1 (via N-terminus). In terms of processing, phosphorylated. Phosphorylation modulates its effect on KCNMA1 activation kinetics. Post-translationally, N-glycosylated. A highly glycosylated form is promoted by KCNMA1. Glycosylation, which is not required for the interaction with KCNMA1 and subcellular location, increases protection against charybdotoxin.

The protein localises to the membrane. In terms of biological role, regulatory subunit of the calcium activated potassium KCNMA1 (maxiK) channel. Modulates the calcium sensitivity and gating kinetics of KCNMA1, thereby contributing to KCNMA1 channel diversity. Decreases the gating kinetics and calcium sensitivity of the KCNMA1 channel, but with fast deactivation kinetics. May decrease KCNMA1 channel openings at low calcium concentrations but increases channel openings at high calcium concentrations. Makes KCNMA1 channel resistant to 100 nM charybdotoxin (CTX) toxin concentrations. The polypeptide is Calcium-activated potassium channel subunit beta-4 (Kcnmb4) (Rattus norvegicus (Rat)).